A 205-amino-acid polypeptide reads, in one-letter code: Large ribosomal subunit protein eL15 (205 aa).

Disordered stretches follow at residues 70–90 (GRKR…HGVN) and 172–197 (RGLR…KRRN).

It belongs to the eukaryotic ribosomal protein eL15 family.

In Dictyostelium discoideum (Social amoeba), this protein is Large ribosomal subunit protein eL15 (rpl15-1).